Reading from the N-terminus, the 548-residue chain is Telomerase Cajal body protein 1 (548 aa).

The interval 1-142 is disordered; sequence MKTLETQPLA…SGEPAAEDEG (142 aa). The span at 15-31 shows a compositional bias: low complexity; the sequence is PSDQDPAPAHPSPHASP. Phosphoserine occurs at positions 26, 30, and 54. S64 carries the post-translational modification Phosphoserine; by ATM. Phosphoserine occurs at positions 85, 90, 112, and 114. 6 WD repeats span residues 167–206, 222–267, 272–313, 323–364, 365–405, and 411–450; these read QPEN…YHEG, EGDT…LRAS, NHLD…RDCE, GQSG…ALLG, GHQG…YPLW, and VTTN…NDGK. T489 is subject to Phosphothreonine. S491 is modified (phosphoserine). Residues 526–548 are disordered; the sequence is SIPDDHQGEKGQGGTEGGVGELI. The span at 535–548 shows a compositional bias: gly residues; sequence KGQGGTEGGVGELI.

This sequence belongs to the TCAB1 family. Component of the telomerase holoenzyme complex composed of one molecule of TERT, one molecule of WRAP53/TCAB1, two molecules of H/ACA ribonucleoprotein complex subunits DKC1, NOP10, NHP2 and GAR1, and a telomerase RNA template component (TERC). The telomerase holoenzyme complex is associated with TEP1, SMG6/EST1A and POT1. Interacts with the chaperonin-containing T-complex (TRiC) complex; which mediates the folding of WRAP53/TCAB1. Interacts with COIL. Interacts with SMN1. Interacts with RNF8. Interacts with histone H2AX. In terms of processing, phosphorylated at Ser-64 by ATM in response to DNA damage, promoting its interaction with histone H2AX and localization to sites of DNA double-strand breaks. In terms of tissue distribution, expressed in all tissues and cell lines examined.

It localises to the nucleus. The protein localises to the cajal body. Its subcellular location is the chromosome. It is found in the telomere. Its function is as follows. RNA chaperone that plays a key role in telomere maintenance and RNA localization to Cajal bodies. Specifically recognizes and binds the Cajal body box (CAB box) present in both small Cajal body RNAs (scaRNAs) and telomerase RNA template component (TERC). Essential component of the telomerase holoenzyme complex, a ribonucleoprotein complex essential for the replication of chromosome termini that elongates telomeres in most eukaryotes. In the telomerase holoenzyme complex, required to stimulate the catalytic activity of the complex. Acts by specifically binding the CAB box of the TERC RNA and controlling the folding of the CR4/CR5 region of the TERC RNA, a critical step for telomerase activity. In addition, also controls telomerase holoenzyme complex localization to Cajal body. During S phase, required for delivery of TERC to telomeres during S phase and for telomerase activity. In addition to its role in telomere maintenance, also required for Cajal body formation, probably by mediating localization of scaRNAs to Cajal bodies. Also plays a role in DNA repair: phosphorylated by ATM in response to DNA damage and relocalizes to sites of DNA double-strand breaks to promote the repair of DNA double-strand breaks. Acts by recruiting the ubiquitin ligase RNF8 to DNA breaks and promote both homologous recombination (HR) and non-homologous end joining (NHEJ). In Homo sapiens (Human), this protein is Telomerase Cajal body protein 1.